We begin with the raw amino-acid sequence, 198 residues long: Recombination protein RecR (198 aa).

The segment at 58 to 73 (CSVCGNFTDKDPCAIC) adopts a C4-type zinc-finger fold. In terms of domain architecture, Toprim spans 81–175 (NTICVVEHPK…KVTRIAHGIP (95 aa)).

It belongs to the RecR family.

Its function is as follows. May play a role in DNA repair. It seems to be involved in an RecBC-independent recombinational process of DNA repair. It may act with RecF and RecO. The polypeptide is Recombination protein RecR (Clostridium tetani (strain Massachusetts / E88)).